Reading from the N-terminus, the 398-residue chain is Phosphoglycerate kinase (398 aa).

Substrate contacts are provided by residues 21 to 23, R36, 59 to 62, R119, and R157; these read DFN and HLGR. ATP contacts are provided by residues K208, G296, E327, and 354-357; that span reads GGDS.

The protein belongs to the phosphoglycerate kinase family. In terms of assembly, monomer.

It localises to the cytoplasm. It carries out the reaction (2R)-3-phosphoglycerate + ATP = (2R)-3-phospho-glyceroyl phosphate + ADP. Its pathway is carbohydrate degradation; glycolysis; pyruvate from D-glyceraldehyde 3-phosphate: step 2/5. The polypeptide is Phosphoglycerate kinase (Streptococcus pneumoniae serotype 2 (strain D39 / NCTC 7466)).